The chain runs to 439 residues: Acyl-lipid (8-3)-desaturase (439 aa).

A Cytochrome b5 heme-binding domain is found at 7–88 (GRSAAREMTA…LPKLDASKVE (82 aa)). Heme-binding residues include His-40 and His-66. A helical transmembrane segment spans residues 123-143 (IPHMIYRVVEIVALFALSFWL). The Histidine box-1 motif lies at 171 to 175 (HEMGH). The Histidine box-2 signature appears at 208-213 (HSKHHA). 3 helical membrane passes run 254–274 (AYLFAPVSCLLIGLGWTLYLH), 287–307 (FVWIFARYIGWFSLMGALGYS), and 312–332 (VGMYLCSFGLGCIYIFLQFAV). Positions 376–380 (QIEHH) match the Histidine box-3 motif.

The protein belongs to the fatty acid desaturase type 1 family. Requires Fe(2+) as cofactor.

The protein localises to the membrane. The catalysed reaction is an (8Z,11Z,14Z)-icosatrienoyl-containing glycerolipid + 2 Fe(II)-[cytochrome b5] + O2 + 2 H(+) = (5Z,8Z,11Z,14Z)-eicosatetraenoyl-containing glycerolipid + 2 Fe(III)-[cytochrome b5] + 2 H2O. It catalyses the reaction an (8Z,11Z,14Z,17Z)-eicosatetraenoyl-containing glycerolipid + 2 Fe(II)-[cytochrome b5] + O2 + 2 H(+) = a (5Z,8Z,11Z,14Z,17Z)-eicosapentaenoyl-containing glycerolipid + 2 Fe(III)-[cytochrome b5] + 2 H2O. Functionally, fatty acid desaturase that introduces a cis double bond at the 5-position in 20-carbon polyunsaturated fatty acids incorporated in a glycerolipid that contain a Delta(8) double bond. The polypeptide is Acyl-lipid (8-3)-desaturase (Thraustochytrium sp).